A 504-amino-acid chain; its full sequence is Maturase K (504 aa).

The protein belongs to the intron maturase 2 family. MatK subfamily.

It localises to the plastid. The protein localises to the chloroplast. Usually encoded in the trnK tRNA gene intron. Probably assists in splicing its own and other chloroplast group II introns. The chain is Maturase K from Cucumis sativus (Cucumber).